A 196-amino-acid polypeptide reads, in one-letter code: Small ribosomal subunit protein uS4c (196 aa).

Residues 16-36 (GALPGLTRKTPKSGSNLKKKF) form a disordered region. The region spanning 89–169 (MRLDNILFRL…LPKHLTIDTL (81 aa)) is the S4 RNA-binding domain.

This sequence belongs to the universal ribosomal protein uS4 family. Part of the 30S ribosomal subunit. Contacts protein S5. The interaction surface between S4 and S5 is involved in control of translational fidelity.

It localises to the plastid. The protein localises to the chloroplast. One of the primary rRNA binding proteins, it binds directly to 16S rRNA where it nucleates assembly of the body of the 30S subunit. Its function is as follows. With S5 and S12 plays an important role in translational accuracy. This is Small ribosomal subunit protein uS4c (rps4) from Brachypodium pinnatum (Tor grass).